Reading from the N-terminus, the 150-residue chain is Snake venom vascular endothelial growth factor toxin barietin (150 aa).

The N-terminal stretch at 1–24 (MAAYLLAVAILFCIQGWPSGTVQG) is a signal peptide. Glu-25 is subject to Pyrrolidone carboxylic acid (Glu). Disulfide bonds link Cys-38/Cys-80, Cys-69/Cys-115, and Cys-73/Cys-117. The interval 119–150 (PRSGSRVNIGKHKRSPEEGEREPSSPLTPGSL) is disordered. A propeptide spanning residues 122–150 (GSRVNIGKHKRSPEEGEREPSSPLTPGSL) is cleaved from the precursor.

The protein belongs to the PDGF/VEGF growth factor family. Snake venom VEGF subfamily. As to quaternary structure, homodimer; disulfide-linked. Interacts with high affinity with VEGF receptor-2 (KDR), and with a lower affinity with VEGF receptor-1 (FLT1). Does not bind VEGF receptor-3 (FLT4) and neuropilin-1 (NRP1). In terms of tissue distribution, expressed by the venom gland.

The protein resides in the secreted. Its function is as follows. Snake venom VEGFs that may contribute to venom dispersion and prey subjugation by inducing vascular permeability and hypotension. This protein induces an increase in capillary permeability after intradermal injection, as well as a drastic hypotensive effect after intravenous injection. The hypotension is mediated by nitric oxide (NO), which is produced by VEGF-activated endothelium NO synthase. Also induces angiogenesis in vitro, probably through VEGF receptor (KDR/VEGFR-2) signaling. The polypeptide is Snake venom vascular endothelial growth factor toxin barietin (Bitis arietans (African puff adder)).